The chain runs to 697 residues: Elongation factor G (697 aa).

Positions 10–285 constitute a tr-type G domain; that stretch reads EKTRNIGIVA…GVNDYLPSPL (276 aa). Residues 19-26, 83-87, and 137-140 each bind GTP; these read AHIDAGKT, DTPGH, and NKMD.

This sequence belongs to the TRAFAC class translation factor GTPase superfamily. Classic translation factor GTPase family. EF-G/EF-2 subfamily.

Its subcellular location is the cytoplasm. In terms of biological role, catalyzes the GTP-dependent ribosomal translocation step during translation elongation. During this step, the ribosome changes from the pre-translocational (PRE) to the post-translocational (POST) state as the newly formed A-site-bound peptidyl-tRNA and P-site-bound deacylated tRNA move to the P and E sites, respectively. Catalyzes the coordinated movement of the two tRNA molecules, the mRNA and conformational changes in the ribosome. This chain is Elongation factor G, found in Ligilactobacillus salivarius (strain UCC118) (Lactobacillus salivarius).